The sequence spans 201 residues: Recombination protein RecR (201 aa).

The C4-type zinc finger occupies C60 to C75. A Toprim domain is found at T83 to P178.

Belongs to the RecR family.

May play a role in DNA repair. It seems to be involved in an RecBC-independent recombinational process of DNA repair. It may act with RecF and RecO. The chain is Recombination protein RecR from Beijerinckia indica subsp. indica (strain ATCC 9039 / DSM 1715 / NCIMB 8712).